The following is a 202-amino-acid chain: Ras-related protein ORAB-1 (202 aa).

Residues 15 to 23 (GDSGVGKSC), 33 to 40 (YTESYIST), 63 to 67 (DTAGQ), 121 to 124 (NKCD), and 151 to 153 (SAK) contribute to the GTP site. An Effector region motif is present at residues 37 to 45 (YISTIGVDF). Positions 173–202 (MGPGATSGGSEKSNVNIQSTPVKSSGGGCC) are disordered. Over residues 180 to 195 (GGSEKSNVNIQSTPVK) the composition is skewed to polar residues. S-geranylgeranyl cysteine attachment occurs at residues Cys201 and Cys202.

The protein belongs to the small GTPase superfamily. Rab family.

It is found in the cell membrane. Functionally, protein transport. Probably involved in vesicular traffic. This is Ras-related protein ORAB-1 from Diplobatis ommata (Ocellated electric ray).